A 631-amino-acid polypeptide reads, in one-letter code: 1-deoxy-D-xylulose-5-phosphate synthase (631 aa).

Thiamine diphosphate is bound by residues histidine 72 and 113 to 115 (GHA). Aspartate 144 is a Mg(2+) binding site. Thiamine diphosphate contacts are provided by residues 145–146 (GA), asparagine 174, tyrosine 287, and glutamate 370. Asparagine 174 contributes to the Mg(2+) binding site.

It belongs to the transketolase family. DXPS subfamily. Homodimer. Mg(2+) is required as a cofactor. The cofactor is thiamine diphosphate.

It carries out the reaction D-glyceraldehyde 3-phosphate + pyruvate + H(+) = 1-deoxy-D-xylulose 5-phosphate + CO2. The protein operates within metabolic intermediate biosynthesis; 1-deoxy-D-xylulose 5-phosphate biosynthesis; 1-deoxy-D-xylulose 5-phosphate from D-glyceraldehyde 3-phosphate and pyruvate: step 1/1. Functionally, catalyzes the acyloin condensation reaction between C atoms 2 and 3 of pyruvate and glyceraldehyde 3-phosphate to yield 1-deoxy-D-xylulose-5-phosphate (DXP). In Prochlorococcus marinus (strain MIT 9515), this protein is 1-deoxy-D-xylulose-5-phosphate synthase.